The chain runs to 527 residues: MIVLGLEGTAHTISCGILDENSIMANVSSMYKPKTGGIHPTQAAAHHVDKVSEVIAKAIEIAGIKPSDIDLVAFSMGPGLGPSLRVTSTAARTLAVTLKRPIIGVNHPLGHIEIGKRLSGAQDPVMLYVSGGNTQVIAHLNGRYRVLGETLDIGIGNMIDKFARYAGIPFPGGPEIEKLAKDGRKLLTLPYSVKGMDTSFSGILTSALEYLKKGEPVEDISFSIQETAFSMLVEVLERALYVSGKDEVLMAGGVALNNRLREMVSEMGREVDATTYMTDKNYCMDNGAMIAQAGLLMYKSGIRMNIEDTSINPRYRIDEVDAPWVIEKNVKYRDAGAESRIVNTDFYGRSAVKKIRIAKGYRLKELDERIRGERMKNEFTVIRRMRDAGICVPIVYDYDPFEKTLTLSQIQGELLRDVIRARPNVMGNVGHDVAVMHKNKISHGDLTVNNIIVSDRICFIDASMGKVNAELEDLAVDVYTLEDSINSLSENGKTLMKEFKMSYRANFPQANDVLNIVEDIRRRHRYV.

The segment at 1 to 324 is kae1; that stretch reads MIVLGLEGTA…YRIDEVDAPW (324 aa). 3 residues coordinate Fe cation: His107, His111, and Tyr128. Residues 128-132, Asp160, Gly173, Glu177, and Asn257 contribute to the L-threonylcarbamoyladenylate site; that span reads YVSGG. Asp285 serves as a coordination point for Fe cation. Residues 330 to 527 enclose the Protein kinase domain; the sequence is VKYRDAGAES…EDIRRRHRYV (198 aa). ATP-binding positions include 333 to 341 and Lys354; that span reads RDAGAESRI. Catalysis depends on Asp445, which acts as the Proton acceptor; for kinase activity.

This sequence in the N-terminal section; belongs to the KAE1 / TsaD family. It in the C-terminal section; belongs to the protein kinase superfamily. Tyr protein kinase family. BUD32 subfamily. As to quaternary structure, component of the KEOPS complex that consists of Kae1, Bud32, Cgi121 and Pcc1; the whole complex dimerizes. Requires Fe(2+) as cofactor.

Its subcellular location is the cytoplasm. It catalyses the reaction L-seryl-[protein] + ATP = O-phospho-L-seryl-[protein] + ADP + H(+). The enzyme catalyses L-threonyl-[protein] + ATP = O-phospho-L-threonyl-[protein] + ADP + H(+). It carries out the reaction L-threonylcarbamoyladenylate + adenosine(37) in tRNA = N(6)-L-threonylcarbamoyladenosine(37) in tRNA + AMP + H(+). Required for the formation of a threonylcarbamoyl group on adenosine at position 37 (t(6)A37) in tRNAs that read codons beginning with adenine. Is a component of the KEOPS complex that is probably involved in the transfer of the threonylcarbamoyl moiety of threonylcarbamoyl-AMP (TC-AMP) to the N6 group of A37. The Kae1 domain likely plays a direct catalytic role in this reaction. The Bud32 domain probably displays kinase activity that regulates Kae1 function. This Thermoplasma volcanium (strain ATCC 51530 / DSM 4299 / JCM 9571 / NBRC 15438 / GSS1) protein is Probable bifunctional tRNA threonylcarbamoyladenosine biosynthesis protein.